The chain runs to 142 residues: 3-hydroxyacyl-[acyl-carrier-protein] dehydratase FabZ (142 aa).

His50 is a catalytic residue.

The protein belongs to the thioester dehydratase family. FabZ subfamily.

It localises to the cytoplasm. It carries out the reaction a (3R)-hydroxyacyl-[ACP] = a (2E)-enoyl-[ACP] + H2O. In terms of biological role, involved in unsaturated fatty acids biosynthesis. Catalyzes the dehydration of short chain beta-hydroxyacyl-ACPs and long chain saturated and unsaturated beta-hydroxyacyl-ACPs. The protein is 3-hydroxyacyl-[acyl-carrier-protein] dehydratase FabZ of Clostridium tetani (strain Massachusetts / E88).